Consider the following 393-residue polypeptide: 8-amino-7-oxononanoate synthase (393 aa).

107–108 (GF) is a binding site for pyridoxal 5'-phosphate. Position 132 (His132) interacts with substrate. Residues Ser180, 205-208 (DDAH), and 236-239 (TLSK) each bind pyridoxal 5'-phosphate. Lys239 is subject to N6-(pyridoxal phosphate)lysine. Thr353 provides a ligand contact to substrate.

The protein belongs to the class-II pyridoxal-phosphate-dependent aminotransferase family. BioF subfamily. As to quaternary structure, homodimer. The cofactor is pyridoxal 5'-phosphate.

The enzyme catalyses 6-carboxyhexanoyl-[ACP] + L-alanine + H(+) = (8S)-8-amino-7-oxononanoate + holo-[ACP] + CO2. Its pathway is cofactor biosynthesis; biotin biosynthesis. Its function is as follows. Catalyzes the decarboxylative condensation of pimeloyl-[acyl-carrier protein] and L-alanine to produce 8-amino-7-oxononanoate (AON), [acyl-carrier protein], and carbon dioxide. This is 8-amino-7-oxononanoate synthase from Coprothermobacter proteolyticus (strain ATCC 35245 / DSM 5265 / OCM 4 / BT).